Here is a 229-residue protein sequence, read N- to C-terminus: Translin (229 aa).

The tract at residues 86–90 (RFHEH) is DNA/RNA binding. Residues 177–198 (LDSGFRLLNLKNDSLRKRYDGL) are leucine-zipper.

The protein belongs to the translin family. Ring-shaped heterooctamer of six TSN and two TSNAX subunits, DNA/RNA binding occurs inside the ring.

It is found in the cytoplasm. It localises to the nucleus. In terms of biological role, exhibits both single-stranded and double-stranded endoribonuclease activity. May act as an activator of RNA-induced silencing complex (RISC) by facilitating endonucleolytic cleavage of the siRNA passenger strand. Functionally, DNA-binding protein that specifically recognizes consensus sequences at the breakpoint junctions in chromosomal translocations, mostly involving immunoglobulin (Ig)/T-cell receptor gene segments. Seems to recognize single-stranded DNA ends generated by staggered breaks occurring at recombination hot spots. The sequence is that of Translin (TSN) from Gallus gallus (Chicken).